Here is a 495-residue protein sequence, read N- to C-terminus: RuBisCO large subunit-binding protein subunit alpha (495 aa).

The protein belongs to the chaperonin (HSP60) family. Oligomer of probably six alpha and six beta subunits.

It localises to the plastid. The protein localises to the chloroplast. Its function is as follows. This protein binds RuBisCO small and large subunits and is implicated in the assembly of the enzyme oligomer. The protein is RuBisCO large subunit-binding protein subunit alpha of Ricinus communis (Castor bean).